Here is a 498-residue protein sequence, read N- to C-terminus: Lysine--tRNA ligase (498 aa).

E409 and E416 together coordinate Mg(2+).

The protein belongs to the class-II aminoacyl-tRNA synthetase family. Homodimer. The cofactor is Mg(2+).

The protein localises to the cytoplasm. It carries out the reaction tRNA(Lys) + L-lysine + ATP = L-lysyl-tRNA(Lys) + AMP + diphosphate. The protein is Lysine--tRNA ligase of Teredinibacter turnerae (strain ATCC 39867 / T7901).